The chain runs to 467 residues: Protein PHOSPHATE STARVATION RESPONSE 3 (467 aa).

Positions 227-266 (MSLPVSSCSDQEDLQDARSPAKVQLSSSRSSSGTASCNKP) are disordered. The region spanning 262-322 (SCNKPRLRWT…HLQKYRLAKY (61 aa)) is the HTH myb-type domain. A DNA-binding region (H-T-H motif) is located at residues 293–318 (PKGVLKLMKVEGLTIYHIKSHLQKYR). Positions 327–337 (KEDKKQEEKKT) are enriched in basic and acidic residues. Disordered stretches follow at residues 327–353 (KEDKKQEEKKTKSVANGNDHAKKKSAQ) and 400–467 (RESI…VHDE). The span at 402–412 (SISSMTSTTEG) shows a compositional bias: polar residues. 2 stretches are compositionally biased toward basic and acidic residues: residues 419–428 (PMEKTEDKAE) and 438–467 (RITDTDAECHSKVDNKKTKPQADLEMVHDE).

It is found in the nucleus. Its function is as follows. Transcription factor involved in phosphate starvation signaling. Binds to P1BS, an imperfect palindromic sequence 5'-GNATATNC-3', to promote the expression of inorganic phosphate (Pi) starvation-responsive genes. Functionally redundant with PHR1 and PHR2 in regulating Pi starvation response and Pi homeostasis. The sequence is that of Protein PHOSPHATE STARVATION RESPONSE 3 from Oryza sativa subsp. indica (Rice).